Consider the following 2228-residue polypeptide: Genome polyprotein (2228 aa).

The interval 55 to 76 (TAEVGSHQPEPLKTSVDKPGSK) is disordered. Short sequence motifs ((L)YPX(n)L motif) lie at residues 167-171 (YPHGL) and 200-205 (YPVWEL). The interval 766 to 836 (MMDRIALGDL…PRKIKGVFSQ (71 aa)) is involved in P1-2A pentamerization. A helical transmembrane segment spans residues 1011 to 1031 (TVEIINTVLCFVKSGILLYVI). The tract at residues 1043–1070 (IGLLRVMNYADIGCSVISCGKVFSKMLE) is membrane-penetrating ability. Positions 1127-1153 (NKKDVLNILKDHQQKIERAIEEADNFC) form a coiled coil. The SF3 helicase domain occupies 1204-1366 (HQKLKNLGSI…SFFKNPHNDM (163 aa)). An ATP-binding site is contributed by 1230–1237 (GKRGGGKS). Residues 1462-1482 (WVAVGAAVGVLGVLVGGWYVY) form a helical membrane-spanning segment. Position 1499 is an O-(5'-phospho-RNA)-tyrosine (Tyr-1499). In terms of domain architecture, Peptidase C3 spans 1514-1728 (DPVESQSTLE…VAKLVTQEMF (215 aa)). Catalysis depends on for protease 3C activity residues His-1563, Asp-1603, and Cys-1691. The region spanning 1977 to 2098 (DVGLDLDFSA…VFSRQVQIDN (122 aa)) is the RdRp catalytic domain.

The protein belongs to the picornaviridae polyprotein family. In terms of assembly, homodimer. Homomultimer; probably interacts with membranes in a multimeric form. Seems to assemble into amyloid-like fibers. Homodimer. Monomer. Interacts with protein 3CD. As to quaternary structure, interacts with host ACBD3. In terms of assembly, interacts with protein 3AB. Interacts with human MAVS. As to quaternary structure, homodimer; disulfide-linked. In terms of assembly, homopentamer. Homooligomer. Interacts with capsid protein VP2. Interacts with capsid protein VP3. As to quaternary structure, interacts with capsid protein VP1. Interacts with capsid protein VP3. In terms of assembly, interacts with capsid protein VP1. Interacts with capsid protein VP2. Post-translationally, specific enzymatic cleavages by viral protease in vivo yield a variety of precursors and mature proteins. Polyprotein processing intermediates are produced, such as P1-2A which is a functional precursor of the structural proteins, VP0 which is a VP4-VP2 precursor, VP1-2A precursor, 3ABC precursor which is a stable and catalytically active precursor of 3A, 3B and 3C proteins, 3AB and 3CD precursors. The assembly signal 2A is removed from VP1-2A by a host protease, possibly host Cathepsin L. This cleavage occurs over a region of 3 amino-acids probably generating VP1 proteins with heterogeneous C-termini. In terms of processing, during virion maturation, immature virions are rendered infectious following cleavage of VP0 into VP4 and VP2. This maturation seems to be an autocatalytic event triggered by the presence of RNA in the capsid and is followed by a conformational change of the particle. The assembly signal 2A is removed from VP1-2A by a host protease, possibly host Cathepsin L in naked virions. This cleavage does not occur in enveloped virions. This cleavage occurs over a region of 3 amino-acids probably generating VP1 proteins with heterogeneous C-termini. Post-translationally, VPg is uridylylated prior to priming replication into VPg-pUpU. In terms of processing, unlike other picornaviruses, does not seem to be myristoylated.

The protein localises to the virion. The protein resides in the host endosome. Its subcellular location is the host multivesicular body. It is found in the host membrane. It localises to the host mitochondrion outer membrane. The protein localises to the host cytoplasm. The protein resides in the host cytoplasmic vesicle membrane. The catalysed reaction is RNA(n) + a ribonucleoside 5'-triphosphate = RNA(n+1) + diphosphate. The enzyme catalyses a ribonucleoside 5'-triphosphate + H2O = a ribonucleoside 5'-diphosphate + phosphate + H(+). It carries out the reaction Selective cleavage of Gln-|-Gly bond in the poliovirus polyprotein. In other picornavirus reactions Glu may be substituted for Gln, and Ser or Thr for Gly.. Its function is as follows. Capsid proteins VP1, VP2, and VP3 form a closed capsid enclosing the viral positive strand RNA genome. All these proteins contain a beta-sheet structure called beta-barrel jelly roll. Together they form an icosahedral capsid (T=3) composed of 60 copies of each VP1, VP2, and VP3, with a diameter of approximately 300 Angstroms. VP1 is situated at the 12 fivefold axes, whereas VP2 and VP3 are located at the quasi-sixfold axes. The naked capsid interacts with the host receptor HAVCR1 to provide virion attachment to and probably entry into the target cell. VP0 precursor is a component of the immature procapsids. Functionally, plays a role in the assembly of the 12 pentamers into an icosahedral structure. Has not been detected in mature virions, supposedly owing to its small size. In terms of biological role, precursor component of immature procapsids that corresponds to an extended form of the structural protein VP1. After maturation, possibly by the host Cathepsin L, the assembly signal 2A is cleaved to give rise to the mature VP1 protein. Its function is as follows. Functions as a viroporin. Affects membrane integrity and causes an increase in membrane permeability. Involved in host intracellular membrane rearrangements probably to give rise to the viral factories. Does not disrupt calcium homeostasis or glycoprotein trafficking. Antagonizes the innate immune response of the host by suppressing IFN-beta synthesis, which it achieves by interfering with the RIG-I/IFIH1 pathway. Affects membrane integrity and causes an increase in membrane permeability. Functionally, associates with and induces structural rearrangements of intracellular membranes. Displays RNA-binding activity. In terms of biological role, the precursor 3ABC is targeted to the mitochondrial membrane where protease 3C activity cleaves and inhibits the host antiviral protein MAVS, thereby disrupting activation of IRF3 through the IFIH1/MDA5 pathway. In vivo, the protease activity of 3ABC precursor is more efficient in cleaving the 2BC precursor than that of protein 3C. The 3ABC precursor may therefore play a role in the proteolytic processing of the polyprotein. Possible viroporin. Its function is as follows. Interacts with the 3CD precursor and with RNA structures found at both the 5'- and 3'-termini of the viral genome. Since the 3AB precursor contains the hydrophobic domain 3A, it probably anchors the whole viral replicase complex to intracellular membranes on which viral RNA synthesis occurs. May serve as membrane anchor to the 3AB and 3ABC precursors via its hydrophobic domain. May interact with RNA. Functionally, acts as a primer for viral RNA replication and remains covalently bound to viral genomic RNA. VPg is uridylylated prior to priming replication into VPg-pUpU. The VPg-pUpU is then used as primer on the genomic RNA poly(A) by the RNA-dependent RNA polymerase to replicate the viral genome. In terms of biological role, cysteine protease that generates mature viral proteins from the precursor polyprotein. In addition to its proteolytic activity, it binds to viral RNA, and thus influences viral genome replication. RNA and substrate bind cooperatively to the protease. Cleaves IKBKG/NEMO to impair innate immune signaling. Cleaves host PABPC1 which may participate in the switch of viral translation to RNA synthesis. Its function is as follows. Interacts with the 3AB precursor and with RNA structures found at both the 5'- and 3'-termini of the viral genome. Disrupts TLR3 signaling by degrading the host adapter protein TICAM1/TRIF. RNA-directed RNA polymerase 3D-POL replicates genomic and antigenomic RNA by recognizing replications specific signals. The sequence is that of Genome polyprotein from Human hepatitis A virus genotype IIIA (isolate NOR-21) (HHAV).